A 917-amino-acid chain; its full sequence is MATTVKVLAKELKRTAPDLLEQLKAAGIEKGSEDDSITEKDKTVLLEHLQKAHGSTDTGARKKITLIKRESSEIRQADSAGRTRTVQVEVRKKRVLVKAGDKAPEEVAAQPVKQVAPAAPAKPVISEEELEKRAAEATRQAELLARQEAEMKAAEEARQKEVTVPVVKEVAPVDKAPVAPAVAEKKLAADKAAKDLAASKEKELADIRARRAAAEAEALAIRDMMSAPARVLKAPSEVAAEEAKKGTLHKPAKAEGAEDKKKAATKVGGKTIKSSETSSTWQEEGTRKSGGLKTRGDTSGGVGGWRSGGGRKKQRQIAEANVDTNFQVPIEPVIRDVHVPETITVAELAHAMAVKSAEVIKLLMGMGQMVTINQVLDQDTAMIIVEEMGHKAHAAKLDDPDLDLGTEGHDAELLPRPPVVTVMGHVDHGKTSLLDKIRTAKVAIGEVGGITQHIGAYHVETPRGMITFLDTPGHEAFTAMRARGAKATDIVILVVAADDGVMPQTKEAIHHAIAGGVPLVVAINKIDKPEANSERVKAELVAEQVVLEEYGGDVPFIPVSAKTGEGIDALLENVLLQAEILELKAPKEAPAQGLVIEARLDKGKGPVATVLVQSGTLKRGDMLLAGSSFGRVRAMMDENGKPCNEAGPSIPVEIQGLSEVPAAGEAVQVMPDERKAREIALFRQGKFRDVKLAKQQAVKLENMMETIGEGAIEAKLLPLIIKADVQGSQEALSQLLMKLSIPEVKVQIVHAAVGGITETDVNLAVVSKAVIIGFNSRADAAARKLAENNGVDIRYHNIIYDAVDEVKLALSGMLIPGKKEEITGLVEIRQVFLVSKVGAIAGCLVVDGIVKRTSSVRLLRDNVVVWTGELDSLKRFKDDAKEVRAGVECGLSLKGYNDIKEGDQLEVFEVTEVARSL.

A disordered region spans residues 241–312 (EEAKKGTLHK…GGWRSGGGRK (72 aa)). Residues 252–262 (AKAEGAEDKKK) are compositionally biased toward basic and acidic residues. Over residues 274–283 (SSETSSTWQE) the composition is skewed to polar residues. Residues 298–308 (TSGGVGGWRSG) are compositionally biased toward gly residues. In terms of domain architecture, tr-type G spans 415-582 (PRPPVVTVMG…NVLLQAEILE (168 aa)). The tract at residues 424-431 (GHVDHGKT) is G1. 424–431 (GHVDHGKT) contributes to the GTP binding site. The G2 stretch occupies residues 449–453 (GITQH). The G3 stretch occupies residues 470–473 (DTPG). GTP-binding positions include 470-474 (DTPGH) and 524-527 (NKID). Residues 524 to 527 (NKID) form a G4 region. Positions 560 to 562 (SAK) are G5.

It belongs to the TRAFAC class translation factor GTPase superfamily. Classic translation factor GTPase family. IF-2 subfamily.

Its subcellular location is the cytoplasm. Functionally, one of the essential components for the initiation of protein synthesis. Protects formylmethionyl-tRNA from spontaneous hydrolysis and promotes its binding to the 30S ribosomal subunits. Also involved in the hydrolysis of GTP during the formation of the 70S ribosomal complex. This Polynucleobacter necessarius subsp. necessarius (strain STIR1) protein is Translation initiation factor IF-2.